The sequence spans 749 residues: Protein kinase domain-containing protein ppk32 (749 aa).

Positions isoleucine 21–phenylalanine 317 constitute a Protein kinase domain. 2 disordered regions span residues lysine 598–lysine 677 and proline 706–leucine 749. A compositionally biased stretch (polar residues) spans serine 602–glycine 651. Phosphoserine is present on serine 632. Composition is skewed to low complexity over residues serine 657 to serine 670 and asparagine 721 to threonine 735.

It localises to the cytoplasm. In Schizosaccharomyces pombe (strain 972 / ATCC 24843) (Fission yeast), this protein is Protein kinase domain-containing protein ppk32 (ppk32).